A 280-amino-acid chain; its full sequence is Shikimate kinase (280 aa).

74–84 contributes to the ATP binding site; sequence PGGSGLGSSSA.

It belongs to the GHMP kinase family. Archaeal shikimate kinase subfamily.

Its subcellular location is the cytoplasm. The enzyme catalyses shikimate + ATP = 3-phosphoshikimate + ADP + H(+). It functions in the pathway metabolic intermediate biosynthesis; chorismate biosynthesis; chorismate from D-erythrose 4-phosphate and phosphoenolpyruvate: step 5/7. In Archaeoglobus fulgidus (strain ATCC 49558 / DSM 4304 / JCM 9628 / NBRC 100126 / VC-16), this protein is Shikimate kinase (aroK).